Reading from the N-terminus, the 252-residue chain is Protein IL-40 (252 aa).

The first 18 residues, 1 to 18, serve as a signal peptide directing secretion; the sequence is MALLQLLLFAMLAACGFS. 2 N-linked (GlcNAc...) asparagine glycosylation sites follow: Asn-82 and Asn-177.

Expressed in bone marrow, spleen and lymph node.

The protein localises to the secreted. Functionally, probable B cell-associated cytokine that plays a role in the regulation of humoral immune responses. Involved in lymphocyte B cell development and immunoglobulin/IgA production. The protein is Protein IL-40 of Mus musculus (Mouse).